Consider the following 52-residue polypeptide: UPF0391 membrane protein ABAYE0050 (52 aa).

A run of 2 helical transmembrane segments spans residues 6 to 26 and 30 to 50; these read IIFA…VAGL and FAVI…ISRG.

Belongs to the UPF0391 family.

The protein resides in the cell membrane. The protein is UPF0391 membrane protein ABAYE0050 of Acinetobacter baumannii (strain AYE).